Here is a 456-residue protein sequence, read N- to C-terminus: GTPase Der (456 aa).

EngA-type G domains lie at Pro4–Glu169 and Ile178–Arg353. GTP is bound by residues Gly10–Ser17, Asp57–Leu61, Asn120–Glu123, Gly184–Ser191, Asp231–Ile235, and Asn296–Asp299. The region spanning Arg354–Gln439 is the KH-like domain.

The protein belongs to the TRAFAC class TrmE-Era-EngA-EngB-Septin-like GTPase superfamily. EngA (Der) GTPase family. As to quaternary structure, associates with the 50S ribosomal subunit.

In terms of biological role, GTPase that plays an essential role in the late steps of ribosome biogenesis. In Prochlorococcus marinus (strain MIT 9211), this protein is GTPase Der.